A 482-amino-acid chain; its full sequence is MTTRRLTRQHLLANTLGNNDENHPSNHIARAKSSLHSSENSLVNGKKATVSSTNVPKKRHALDDVSNFHNKEGVPLASKNTNVRHTTASVSTRRALEEKSIIPATDDEPASKKRRQPSVFNSSVPSLPQHLSTKSHSVSTHGVDAFHKDQATIPKKLKKDVDERVVSKDIPKLHRDSVESPESQDWDDLDAEDWADPLMVSEYVVDIFEYLNELEIETMPSPTYMDRQKELAWKMRGILTDWLIEVHSRFRLLPETLFLAVNIIDRFLSLRVCSLNKLQLVGIAALFIASKYEEVMCPSVQNFVYMADGGYDEEEILQAERYILRVLEFNLAYPNPMNFLRRISKADFYDIQTRTVAKYLVEIGLLDHKLLPYPPSQQCAAAMYLAREMLGRGPWNRNLVHYSGYEEYQLISVVKKMINYLQKPVQHEAFFKKYASKKFMKASLFVRDWIKKNSIPLGDDADEDYTFHKQKRIQHDMKDEEW.

3 stretches are compositionally biased toward polar residues: residues 35–55 (LHSS…STNV), 78–92 (SKNT…SVST), and 118–140 (SVFN…SVST). Positions 35-140 (LHSSENSLVN…LSTKSHSVST (106 aa)) are disordered. In terms of domain architecture, Cyclin N-terminal spans 206-332 (DIFEYLNELE…ILRVLEFNLA (127 aa)).

Belongs to the cyclin family. Cyclin AB subfamily. In terms of assembly, interacts with cdc2. Interacts with rum1. Associates with microtubules. Also interacts with cdc11.

The protein resides in the nucleus. Its subcellular location is the cytoplasm. It is found in the cytoskeleton. It localises to the microtubule organizing center. The protein localises to the spindle pole body. Its function is as follows. Essential for the control of the cell cycle at the G2/M (mitosis) transition. Interacts with the cdc2 protein kinase to form MPF. G2/M cyclins accumulate steadily during G2 and are abruptly destroyed at mitosis. Involved in the reorganization of the cytoskeleton on transition from G2 to mitosis. Association with rum1 promotes its proteolysis during G1. Also essential for initiation of meiosis II. This Schizosaccharomyces pombe (strain 972 / ATCC 24843) (Fission yeast) protein is G2/mitotic-specific cyclin cdc13.